The primary structure comprises 257 residues: Pyrroline-5-carboxylate reductase (257 aa).

It belongs to the pyrroline-5-carboxylate reductase family.

The protein localises to the cytoplasm. It catalyses the reaction L-proline + NADP(+) = (S)-1-pyrroline-5-carboxylate + NADPH + 2 H(+). The catalysed reaction is L-proline + NAD(+) = (S)-1-pyrroline-5-carboxylate + NADH + 2 H(+). It functions in the pathway amino-acid biosynthesis; L-proline biosynthesis; L-proline from L-glutamate 5-semialdehyde: step 1/1. Catalyzes the reduction of 1-pyrroline-5-carboxylate (PCA) to L-proline. The protein is Pyrroline-5-carboxylate reductase of Helicobacter pylori (strain J99 / ATCC 700824) (Campylobacter pylori J99).